The sequence spans 295 residues: Protein LplC (295 aa).

The next 6 helical transmembrane spans lie at 21–41, 81–101, 116–136, 142–162, 199–219, and 260–280; these read ILFL…IIAG, VSIF…FTMA, LNLV…YLVV, LDTY…LIII, VIAT…FHAL, and GIKL…YPFL. The ABC transmembrane type-1 domain maps to 79–280; the sequence is MGVSIFITVV…LPILAVYPFL (202 aa).

The protein belongs to the binding-protein-dependent transport system permease family. CysTW subfamily.

The protein localises to the cell membrane. This is Protein LplC (lplC) from Bacillus subtilis (strain 168).